We begin with the raw amino-acid sequence, 46 residues long: Succinate dehydrogenase subunit 8, mitochondrial (46 aa).

Component of complex II composed of eight subunits in plants: four classical SDH subunits SDH1, SDH2, SDH3 and SDH4 (a flavoprotein (FP), an iron-sulfur protein (IP), and a cytochrome b composed of a large and a small subunit.), as well as four subunits unknown in mitochondria from bacteria and heterotrophic eukaryotes.

The protein localises to the mitochondrion inner membrane. It functions in the pathway carbohydrate metabolism; tricarboxylic acid cycle. In Arabidopsis thaliana (Mouse-ear cress), this protein is Succinate dehydrogenase subunit 8, mitochondrial.